A 268-amino-acid chain; its full sequence is MEFAHLTVLSLFCLAFVGITATSSGEDYWQSIWPNTPLPKTFSDLLIPSGITNSLPIKSEELKQYSTLFFEHDLHPGKNFNLGHTNSVGSIIRPFTKSRQGVTDSIWLANKEKQSLEDFCYSPTAIAEHKHCVSSLKSMIDQVISHFGSTKIKAISSNFAPYQDQYVVEDVKKVGDNAVMCHRLNFEKVVFNCHQVRDTTAYVVSLVASDGTKTKALTVCHHDTRGMNPELLYEALEVTPGTVPVCHFIGNKAAAWVPNHTADNLCVM.

The signal sequence occupies residues 1–25 (MEFAHLTVLSLFCLAFVGITATSSG). The BURP domain occupies 68–259 (LFFEHDLHPG…GNKAAAWVPN (192 aa)).

Expressed in seeds. Detected only in the embryo. In germinating seedlings, detected in roots, root caps, root hairs, vascular bundle, mesophyll cells and epidermal cells of the cotyledons and the hypocotyl.

It localises to the golgi apparatus. It is found in the golgi stack. Its subcellular location is the prevacuolar compartment. Functionally, associated with the protein storage vacuole formation. This is Unknown seed protein USP from Vicia faba (Broad bean).